A 393-amino-acid polypeptide reads, in one-letter code: MSLSIGMVAGEPSGDLLASRVIAGLRRDETVQCQGIGGPAMQAAGFDAWHPMHALTVFGYVDALKRLPSLLRTYGDVKRRWLASPPSVFVGVDAPDFNLKLELALRQAGTPTVHFVGPSIWAWRYERIHKIREAVSHMLVLFPFEEELYRKEGIPVTYVGHPLADAIPMQPDRAAARQRLGLDADARVLAILPGSRSSEIRILAPRFLQAAQQLQRRDPGLVCVVPMVNAQRRAEFEAILAQYPVPGLRCLTAEDAASGGLPVAWSALEASNAVLVASGTATLEAALFKRPMVISYYLSPWMRRIMAWKSGQQRPYLPWVGLPNVLLRDFAVPELLQDDATPDKLAEATWAALTDDAQAARVEARFAAMHRDLTRDTATLAARAILEVAHGAA.

Belongs to the LpxB family.

It catalyses the reaction a lipid X + a UDP-2-N,3-O-bis[(3R)-3-hydroxyacyl]-alpha-D-glucosamine = a lipid A disaccharide + UDP + H(+). The protein operates within bacterial outer membrane biogenesis; LPS lipid A biosynthesis. Functionally, condensation of UDP-2,3-diacylglucosamine and 2,3-diacylglucosamine-1-phosphate to form lipid A disaccharide, a precursor of lipid A, a phosphorylated glycolipid that anchors the lipopolysaccharide to the outer membrane of the cell. This chain is Lipid-A-disaccharide synthase, found in Bordetella petrii (strain ATCC BAA-461 / DSM 12804 / CCUG 43448).